Here is a 149-residue protein sequence, read N- to C-terminus: MISNFLKSNNIKNNSPFRSFCTRYSESHEWIKFNHRNKTCTLGITKYASDQLKSIVNINLPDLNSTITRKQPFGNIESTKTVADLFSDVDGKAVLLNSDVIVDPTIVSHSPEDKGWLIKMESNDFESFNKMMTKSEYGQFLKDINKSNV.

The 83-residue stretch at 39–121 (TCTLGITKYA…EDKGWLIKME (83 aa)) folds into the Lipoyl-binding domain. N6-lipoyllysine is present on lysine 80.

This sequence belongs to the GcvH family. As to quaternary structure, the glycine cleavage system is composed of four proteins: P, T, L and H. Requires (R)-lipoate as cofactor.

Functionally, the glycine cleavage system catalyzes the degradation of glycine. The H protein shuttles the methylamine group of glycine from the P protein to the T protein. The polypeptide is Putative glycine cleavage system H protein 3 (gcvH3) (Dictyostelium discoideum (Social amoeba)).